A 338-amino-acid chain; its full sequence is 5-dehydro-2-deoxygluconokinase (338 aa).

This sequence belongs to the carbohydrate kinase PfkB family.

The enzyme catalyses 5-dehydro-2-deoxy-D-gluconate + ATP = 6-phospho-5-dehydro-2-deoxy-D-gluconate + ADP + H(+). It participates in polyol metabolism; myo-inositol degradation into acetyl-CoA; acetyl-CoA from myo-inositol: step 5/7. In terms of biological role, catalyzes the phosphorylation of 5-dehydro-2-deoxy-D-gluconate (2-deoxy-5-keto-D-gluconate or DKG) to 6-phospho-5-dehydro-2-deoxy-D-gluconate (DKGP). In Mesomycoplasma hyopneumoniae (strain J / ATCC 25934 / NCTC 10110) (Mycoplasma hyopneumoniae), this protein is 5-dehydro-2-deoxygluconokinase.